Consider the following 286-residue polypeptide: Pyridoxal kinase PdxY (286 aa).

Substrate-binding positions include S9 and 44-45 (TQ). Residues D111, A143, E148, K181, and 208-211 (RPLV) contribute to the ATP site. Substrate is bound at residue D223.

Belongs to the pyridoxine kinase family. PdxY subfamily. Homodimer. It depends on Mg(2+) as a cofactor.

It carries out the reaction pyridoxal + ATP = pyridoxal 5'-phosphate + ADP + H(+). It participates in cofactor metabolism; pyridoxal 5'-phosphate salvage; pyridoxal 5'-phosphate from pyridoxal: step 1/1. Pyridoxal kinase involved in the salvage pathway of pyridoxal 5'-phosphate (PLP). Catalyzes the phosphorylation of pyridoxal to PLP. The polypeptide is Pyridoxal kinase PdxY (Salmonella paratyphi A (strain ATCC 9150 / SARB42)).